The primary structure comprises 364 residues: Phosphoserine aminotransferase (364 aa).

Residue Arg-46 coordinates L-glutamate. Pyridoxal 5'-phosphate contacts are provided by residues 80–81 (AR), Trp-106, Thr-157, Asp-176, and Gln-199. The residue at position 200 (Lys-200) is an N6-(pyridoxal phosphate)lysine. 241–242 (NT) lines the pyridoxal 5'-phosphate pocket.

It belongs to the class-V pyridoxal-phosphate-dependent aminotransferase family. SerC subfamily. Homodimer. Requires pyridoxal 5'-phosphate as cofactor.

The protein localises to the cytoplasm. It catalyses the reaction O-phospho-L-serine + 2-oxoglutarate = 3-phosphooxypyruvate + L-glutamate. The enzyme catalyses 4-(phosphooxy)-L-threonine + 2-oxoglutarate = (R)-3-hydroxy-2-oxo-4-phosphooxybutanoate + L-glutamate. It participates in amino-acid biosynthesis; L-serine biosynthesis; L-serine from 3-phospho-D-glycerate: step 2/3. The protein operates within cofactor biosynthesis; pyridoxine 5'-phosphate biosynthesis; pyridoxine 5'-phosphate from D-erythrose 4-phosphate: step 3/5. Its function is as follows. Catalyzes the reversible conversion of 3-phosphohydroxypyruvate to phosphoserine and of 3-hydroxy-2-oxo-4-phosphonooxybutanoate to phosphohydroxythreonine. The sequence is that of Phosphoserine aminotransferase from Vibrio parahaemolyticus serotype O3:K6 (strain RIMD 2210633).